We begin with the raw amino-acid sequence, 128 residues long: MRHRKSGRQLNRNSSHRQALFRNLASALVSHEIIKTTLPKAKELRRVVEPLITLAKVDSVANRRLAFARTRNIETVAKLFNELGPRFANRAGGYTRILKCGFRAGDNAPMAYIELVDRPEVAAEQAAE.

The protein belongs to the bacterial ribosomal protein bL17 family. In terms of assembly, part of the 50S ribosomal subunit. Contacts protein L32.

This is Large ribosomal subunit protein bL17 from Glaesserella parasuis serovar 5 (strain SH0165) (Haemophilus parasuis).